Reading from the N-terminus, the 549-residue chain is Oxygen-dependent choline dehydrogenase (549 aa).

4 to 33 (DYIIIGSGSAGSALAHRLSEDSRNSVIVLE) is a binding site for FAD. His465 (proton acceptor) is an active-site residue.

This sequence belongs to the GMC oxidoreductase family. FAD is required as a cofactor.

The catalysed reaction is choline + A = betaine aldehyde + AH2. It carries out the reaction betaine aldehyde + NAD(+) + H2O = glycine betaine + NADH + 2 H(+). It functions in the pathway amine and polyamine biosynthesis; betaine biosynthesis via choline pathway; betaine aldehyde from choline (cytochrome c reductase route): step 1/1. In terms of biological role, involved in the biosynthesis of the osmoprotectant glycine betaine. Catalyzes the oxidation of choline to betaine aldehyde and betaine aldehyde to glycine betaine at the same rate. This chain is Oxygen-dependent choline dehydrogenase, found in Sinorhizobium fredii (strain NBRC 101917 / NGR234).